The sequence spans 356 residues: uncharacterized protein (356 aa).

The segment at 25 to 72 (EENNQENNKKFIEEFYPDKESDKNFSDDDSDDSDDSDDSENSDEEFDN) is disordered. Positions 31 to 50 (NNKKFIEEFYPDKESDKNFS) are enriched in basic and acidic residues. Residues 51-70 (DDDSDDSDDSDDSENSDEEF) show a composition bias toward acidic residues. The stretch at 328–356 (EDTLNHSHSNKIKELENKITELKYQNEIN) forms a coiled coil.

It belongs to the mimivirus L17/R827 family.

This is an uncharacterized protein from Acanthamoeba polyphaga mimivirus (APMV).